The primary structure comprises 334 residues: Small ribosomal subunit protein RACK1z (334 aa).

WD repeat units lie at residues 16–47, 73–103, 115–145, 163–195, 207–237, 248–277, and 296–326; these read GHNDVVTAIATPIDNSPFIVSSSRDKSLLVWD, GHSHFVQDVVLSSDGQFALSGSWDGELRLWD, GHDKDVLSVAFSVDNRQIVSASRDRTIKLWN, GHNGWVSCVRFSPNTFQPTIVSGSWDRTVKVWN, GHGGYVNAVAVSPDGSLCASGGKDGVTLLWD, DAGSIIHSLCFSPNRYWLCAATQDSIKIWD, and NQMLYCTSLNWSADGSTLYAGYTDGTIRIYK.

This sequence belongs to the WD repeat G protein beta family. Ribosomal protein RACK1 subfamily. In terms of assembly, interacts with RAC1, RAC3, RAC6, RAR1, SGT1 and RBOHB. Homodimer and heterodimer with RACK1B. As to expression, widely expressed.

It localises to the cytoplasm. The protein resides in the cell membrane. In terms of biological role, component of the RACK1 regulatory proteins that functions in innate immunity by interacting with multiple proteins in the RAC1 immune complex. Acts as a positive regulator of reactive oxygen species (ROS) production and is required for resistance against rice blast (M.grisea) infection. This is Small ribosomal subunit protein RACK1z (RACK1A) from Oryza sativa subsp. japonica (Rice).